Consider the following 786-residue polypeptide: Signal transducer and activator of transcription 5B (786 aa).

Position 90 is a phosphotyrosine (Y90). The residue at position 128 (S128) is a Phosphoserine. Residues 589 to 686 (WNDGAILGFV…EVYSKYYTPV (98 aa)) form the SH2 domain. Phosphotyrosine is present on residues Y682 and Y699.

Belongs to the transcription factor STAT family. In terms of assembly, upon activation, forms a homodimer or a heterodimer with a related family member. Binds NR3C1. Interacts with NCOA1. Interacts with SOCS7. Interacts (via SH2 domain) with INSR. Interacts with CPEB3; this inhibits STAT5B-mediated transcriptional activation. Tyrosine phosphorylated in response to signaling via activated KIT, resulting in translocation to the nucleus. Tyrosine phosphorylated in response to signaling via activated FLT3; wild-type FLT3 results in much weaker phosphorylation than constitutively activated mutant FLT3. Alternatively, can be phosphorylated by JAK2. Phosphorylation at Tyr-699 by PTK6 or HCK leads to an increase of its transcriptional activity. As to expression, in the virgin, found in most tissues. Particularly abundant in muscle tissue of virgin and lactating females, and of males.

It is found in the cytoplasm. The protein resides in the nucleus. In terms of biological role, carries out a dual function: signal transduction and activation of transcription. Mediates cellular responses to the cytokine KITLG/SCF and other growth factors. Binds to the GAS element and activates PRL-induced transcription. Positively regulates hematopoietic/erythroid differentiation. This Mus musculus (Mouse) protein is Signal transducer and activator of transcription 5B (Stat5b).